The following is a 505-amino-acid chain: Glucan endo-1,3-beta-glucosidase 2 (505 aa).

An N-terminal signal peptide occupies residues 1-20 (MASLLHLLLLSLSLLVLASA). N-linked (GlcNAc...) asparagine glycosylation occurs at Asn97. Glu125 functions as the Proton donor in the catalytic mechanism. N-linked (GlcNAc...) asparagine glycosylation is found at Asn180 and Asn262. Glu272 functions as the Nucleophile in the catalytic mechanism. N-linked (GlcNAc...) asparagine glycosylation is found at Asn304, Asn361, and Asn365. Cysteines 369 and 432 form a disulfide. 3 N-linked (GlcNAc...) asparagine glycosylation sites follow: Asn461, Asn466, and Asn473. Ser477 carries GPI-anchor amidated serine lipidation. The propeptide at 478–505 (SGIRSDLYYSRGIWSILTVMILNVANIL) is removed in mature form.

Belongs to the glycosyl hydrolase 17 family. Contains two additional disulfide bonds.

The protein resides in the cell membrane. The catalysed reaction is Hydrolysis of (1-&gt;3)-beta-D-glucosidic linkages in (1-&gt;3)-beta-D-glucans.. The protein is Glucan endo-1,3-beta-glucosidase 2 of Arabidopsis thaliana (Mouse-ear cress).